The primary structure comprises 340 residues: UDP-3-O-acylglucosamine N-acyltransferase (340 aa).

Histidine 238 functions as the Proton acceptor in the catalytic mechanism.

The protein belongs to the transferase hexapeptide repeat family. LpxD subfamily. As to quaternary structure, homotrimer.

It carries out the reaction a UDP-3-O-[(3R)-3-hydroxyacyl]-alpha-D-glucosamine + a (3R)-hydroxyacyl-[ACP] = a UDP-2-N,3-O-bis[(3R)-3-hydroxyacyl]-alpha-D-glucosamine + holo-[ACP] + H(+). Its pathway is bacterial outer membrane biogenesis; LPS lipid A biosynthesis. Its function is as follows. Catalyzes the N-acylation of UDP-3-O-acylglucosamine using 3-hydroxyacyl-ACP as the acyl donor. Is involved in the biosynthesis of lipid A, a phosphorylated glycolipid that anchors the lipopolysaccharide to the outer membrane of the cell. In Psychromonas ingrahamii (strain DSM 17664 / CCUG 51855 / 37), this protein is UDP-3-O-acylglucosamine N-acyltransferase.